The chain runs to 150 residues: 3-dehydroquinate dehydratase (150 aa).

Residue tyrosine 26 is the Proton acceptor of the active site. Substrate is bound by residues asparagine 77, histidine 83, and aspartate 90. Residue histidine 103 is the Proton donor of the active site. Substrate is bound by residues 104–105 (LS) and arginine 114.

This sequence belongs to the type-II 3-dehydroquinase family. In terms of assembly, homododecamer.

It catalyses the reaction 3-dehydroquinate = 3-dehydroshikimate + H2O. It participates in metabolic intermediate biosynthesis; chorismate biosynthesis; chorismate from D-erythrose 4-phosphate and phosphoenolpyruvate: step 3/7. Functionally, catalyzes a trans-dehydration via an enolate intermediate. The sequence is that of 3-dehydroquinate dehydratase from Photobacterium profundum (strain SS9).